The following is a 422-amino-acid chain: S-adenosylmethionine synthase (422 aa).

His16 provides a ligand contact to ATP. Asp18 lines the Mg(2+) pocket. Glu44 contributes to the K(+) binding site. L-methionine is bound by residues Glu57 and Gln100. Positions 100–110 (QSPDISQGVSA) are flexible loop. Residues 175–177 (DGK), 251–252 (KF), Asp260, 266–267 (RK), Ala283, and Lys287 each bind ATP. Asp260 contacts L-methionine. Lys291 is a binding site for L-methionine.

It belongs to the AdoMet synthase family. In terms of assembly, homotetramer; dimer of dimers. It depends on Mg(2+) as a cofactor. K(+) serves as cofactor.

Its subcellular location is the cytoplasm. The enzyme catalyses L-methionine + ATP + H2O = S-adenosyl-L-methionine + phosphate + diphosphate. The protein operates within amino-acid biosynthesis; S-adenosyl-L-methionine biosynthesis; S-adenosyl-L-methionine from L-methionine: step 1/1. Functionally, catalyzes the formation of S-adenosylmethionine (AdoMet) from methionine and ATP. The overall synthetic reaction is composed of two sequential steps, AdoMet formation and the subsequent tripolyphosphate hydrolysis which occurs prior to release of AdoMet from the enzyme. This chain is S-adenosylmethionine synthase, found in Rippkaea orientalis (strain PCC 8801 / RF-1) (Cyanothece sp. (strain PCC 8801)).